An 832-amino-acid polypeptide reads, in one-letter code: MGSLSCSIIHLVLILQLQTFFVFSQNIRNGSVPVGESLTASESQQISSSWRSPSGDFAFGFRKIQPNDGFTLSIWFDKISDKTIVWHAQAVNTTTGLVPNGSKVTLTADGGLVIADPRGQELWRALSGGSVSRGRFTDDGNFVLFRDGSEDSDEVLWSSFENPTDTLLPNQNIEVGRNLSSRRTETSFKKGRFSLRLEDDGNLQLHSLNAETASESDIYSQYYESNTNDPNNPGIQLVFNQSGEIYVLQRNNSRFVVKDRDPDFSIAAPFYISTGFLLSTIIPKEARRIVGGCLLGLCRDNMCSPDDALGNMACGYNNICSLGNNKRPKCECPERFVLKDPSNEYGDCLPDFEMQTCRPENQTANSDVNLYEFITLEKTNWPFGDYESYANYDEERCKASCLSDCLCAAVIFGTNRDLKCWKKKFPLSHGERSPRGDSDTFIKVRNRSIADVPVTGNRAKKLDWLIIACSVLLGTSAFVIFDTSCSYRKTKKSKNMMKNQARDIGRTTATTTANELNLRVFTYGELAEATRDFTEELGRGAFGIVYKGYLEVAGGSEVTVAVKKLDRLDLDNEKEFKNEVKVIGQIHHKNLVRLIGFCNEGQSQMIVYEFLPQGTLANFLFRRPRPSWEDRKNIAVAIARGILYLHEECSEQIIHCDIKPQNILLDEYYTPRISDFGLAKLLLMNQTYTLTNIRGTKGYVAPEWFRNSPITSKVDVYSYGVMLLEIVCCKKAVDLEDNVILINWAYDCFRQGRLEDLTEDDSEAMNDMETVERYVKIAIWCIQEEHGMRPNMRNVTQMLEGVIQVFDPPNPSPYSTFTWSDESLSSDPVSLV.

Positions 1–24 are cleaved as a signal peptide; it reads MGSLSCSIIHLVLILQLQTFFVFS. At 25-461 the chain is on the extracellular side; that stretch reads QNIRNGSVPV…VPVTGNRAKK (437 aa). Residues asparagine 29, asparagine 92, asparagine 100, asparagine 178, asparagine 240, and asparagine 251 are each glycosylated (N-linked (GlcNAc...) asparagine). Residues 37–157 enclose the Bulb-type lectin domain; the sequence is SLTASESQQI…GSEDSDEVLW (121 aa). An EGF-like; atypical domain is found at 299 to 349; it reads RDNMCSPDDALGNMACGYNNICSLGNNKRPKCECPERFVLKDPSNEYGDCL. 3 cysteine pairs are disulfide-bonded: cysteine 303-cysteine 320, cysteine 314-cysteine 330, and cysteine 332-cysteine 348. Residues 357-446 form the PAN domain; it reads CRPENQTANS…DSDTFIKVRN (90 aa). Residue asparagine 361 is glycosylated (N-linked (GlcNAc...) asparagine). Disulfide bonds link cysteine 397–cysteine 420 and cysteine 401–cysteine 407. Asparagine 446 carries an N-linked (GlcNAc...) asparagine glycan. A helical membrane pass occupies residues 462 to 482; that stretch reads LDWLIIACSVLLGTSAFVIFD. The Cytoplasmic portion of the chain corresponds to 483–832; it reads TSCSYRKTKK…SLSSDPVSLV (350 aa). Positions 531–803 constitute a Protein kinase domain; that stretch reads RDFTEELGRG…NVTQMLEGVI (273 aa). ATP is bound by residues 537-545 and lysine 563; that span reads LGRGAFGIV. Positions 622 to 638 are caM-binding; it reads RRPRPSWEDRKNIAVAI. The active-site Proton acceptor is the aspartate 657.

It belongs to the protein kinase superfamily. Ser/Thr protein kinase family.

It localises to the cell membrane. It carries out the reaction L-seryl-[protein] + ATP = O-phospho-L-seryl-[protein] + ADP + H(+). The enzyme catalyses L-threonyl-[protein] + ATP = O-phospho-L-threonyl-[protein] + ADP + H(+). This chain is G-type lectin S-receptor-like serine/threonine-protein kinase RLK1 (RLK1), found in Arabidopsis thaliana (Mouse-ear cress).